Consider the following 400-residue polypeptide: Sphingosine 1-phosphate receptor 5 (400 aa).

Residues 1–41 (MEPGLLRPAPVSEVIVLHYNYTGKLRGARYQPGAGLRADAA) lie on the Extracellular side of the membrane. N20 carries an N-linked (GlcNAc...) asparagine glycan. Residues 42–62 (VCLAVCAFIVLENLAVLLVLV) form a helical membrane-spanning segment. The Cytoplasmic portion of the chain corresponds to 63–68 (RHPRFH). A helical membrane pass occupies residues 69 to 89 (APMFLLLGSLTLSDLLAGAAY). Topologically, residues 90-111 (ATNILLSGPLTLRLSPALWFAR) are extracellular. The helical transmembrane segment at 112–132 (EGGVFVALAASVLSLLAIALE) threads the bilayer. Topologically, residues 133–151 (RHLTMARRGPAPAASRART) are cytoplasmic. A helical transmembrane segment spans residues 152 to 172 (LAMAVAAWGASLLLGLLPALG). The Extracellular segment spans residues 173–192 (WNCLGRLETCSTVLPLYAKA). A helical membrane pass occupies residues 193 to 213 (YVLFCVLAFLGILAAICALYA). The Cytoplasmic portion of the chain corresponds to 214–253 (RIYCQVRANARRLRAGPGSRRATSSSRSRHTPRSLALLRT). The helical transmembrane segment at 254–274 (LSVVLLAFVACWGPLFLLLLL) threads the bilayer. The Extracellular segment spans residues 275 to 288 (DVACPARACPVLLQ). The chain crosses the membrane as a helical span at residues 289–309 (ADPFLGLAMANSLLNPIIYTF). The Cytoplasmic segment spans residues 310-400 (TNRDLRHALL…NRSLVPTATD (91 aa)). Residue C324 is the site of S-palmitoyl cysteine attachment. Residues 331–400 (QDSSNSLQRS…NRSLVPTATD (70 aa)) form a disordered region. 3 positions are modified to phosphoserine: S340, S342, and S384. The segment covering 360-400 (DRSSSPSEHLSPQQDGVDTSCSTGSPGVATANRSLVPTATD) has biased composition (polar residues).

This sequence belongs to the G-protein coupled receptor 1 family. Expressed in spleen and brain. In the CNS expression is restricted to oligodendrocytes.

The protein localises to the cell membrane. Its function is as follows. Receptor for the lysosphingolipid sphingosine 1-phosphate (S1P). S1P is a bioactive lysophospholipid that elicits diverse physiological effect on most types of cells and tissues. Is coupled to both the G(i/0)alpha and G(12) subclass of heteromeric G-proteins. S1P activation on oligodendroglial cells modulates two distinct functional pathways mediating either process retraction or cell survival. S1P activation on O4-positive pre-oligodendrocytes induces process retraction via a Rho kinase/collapsin response-mediated protein signaling pathway. The S1P-induced survival of mature oligodendrocytes is mediated through a pertussis toxin-sensitive, Akt-dependent pathway. S1P activation on oligodendroglial cells modulates two distinct functional pathways mediating either process retraction or cell survival. These effects depend on the developmental stage of the cell. This chain is Sphingosine 1-phosphate receptor 5 (S1pr5), found in Mus musculus (Mouse).